Here is a 237-residue protein sequence, read N- to C-terminus: Pyridoxal 5'-phosphate synthase subunit PdxS (237 aa).

Catalysis depends on Lys-19, which acts as the Schiff-base intermediate with D-ribose 5-phosphate. Position 91 (Gly-91) interacts with D-ribose 5-phosphate. Arg-103 is a binding site for D-glyceraldehyde 3-phosphate. D-ribose 5-phosphate is bound by residues Gly-157 and 178-179 (GS).

This sequence belongs to the PdxS/SNZ family. As to quaternary structure, in the presence of PdxT, forms a dodecamer of heterodimers.

The catalysed reaction is aldehydo-D-ribose 5-phosphate + D-glyceraldehyde 3-phosphate + L-glutamine = pyridoxal 5'-phosphate + L-glutamate + phosphate + 3 H2O + H(+). It participates in cofactor biosynthesis; pyridoxal 5'-phosphate biosynthesis. Its function is as follows. Catalyzes the formation of pyridoxal 5'-phosphate from ribose 5-phosphate (RBP), glyceraldehyde 3-phosphate (G3P) and ammonia. The ammonia is provided by the PdxT subunit. Can also use ribulose 5-phosphate and dihydroxyacetone phosphate as substrates, resulting from enzyme-catalyzed isomerization of RBP and G3P, respectively. This Methanococcus vannielii protein is Pyridoxal 5'-phosphate synthase subunit PdxS.